We begin with the raw amino-acid sequence, 164 residues long: Cyclic pyranopterin monophosphate synthase (164 aa).

Residues 75–77 and 116–117 contribute to the substrate site; these read MCH and ME. Asp131 is a catalytic residue.

Belongs to the MoaC family. As to quaternary structure, homohexamer; trimer of dimers.

The catalysed reaction is (8S)-3',8-cyclo-7,8-dihydroguanosine 5'-triphosphate = cyclic pyranopterin phosphate + diphosphate. It participates in cofactor biosynthesis; molybdopterin biosynthesis. Catalyzes the conversion of (8S)-3',8-cyclo-7,8-dihydroguanosine 5'-triphosphate to cyclic pyranopterin monophosphate (cPMP). The sequence is that of Cyclic pyranopterin monophosphate synthase from Staphylococcus aureus (strain MRSA252).